The following is a 632-amino-acid chain: MSHPSWLPPRSTGEPLGHVPARMETTHSFGTPSISVSTQQPPKKFAPVVAPKPKYNPYKQPGGEGDFLPPPPPPLEDPGTIPSGSGHFPPPPPLDEGAFIVQRGNPGGKTLEERRSSLDAEIDSLTSILADLECSSPYKPRAPPGSSSSIASPPVSTPVTGHKRMVIPQQPPLTATKKSATKPQAIPIPVTPIGTLKPQPQPVPASYSTASTSSRPAFNVQVKSAQPSTHYMTGSSSGQMYGPGSRSYNTQQVPLSAQCPPPTTCAGTDYAYIPPSGQQAESGFGYTSNQGRYFEPFFAACPSYGGRNEADPAYGQQVQPNTWKREPGYAAPGAGNQNQPGMYSVSGPKKTYITDPVSAPCAPPVQPKERLVKNQKVLQNVVDDRVHGLRKSGFPAPMGPPSVPPSFRPEDELEHLTKKMLYDMENPPADDYFGRCARCGENVVGEGTGCTAMDQVFHVDCFTCMVCDIKLRGQPFYAVEKKAYCEPCYINTLEQCSVCSKPIMERILRATGKAYHPHCFTCVMCHRSLDGIPFTVDACGLIHCIEDFHKKFAPRCSVCKEPIMPAPGQEETVRIVALDRDFHVHCYRCEDCGGLLSEGDNQGCYPLDGHILCKSCNSARIRVLTAKASTDL.

2 disordered regions span residues Met-1 to Leu-118 and Ser-135 to Asn-249. The segment covering Thr-26 to Gln-40 has biased composition (polar residues). Residues Pro-41 to Pro-53 show a composition bias toward low complexity. Lys-109 is subject to N6-acetyllysine. Phosphoserine occurs at positions 117 and 152. A compositionally biased stretch (low complexity) spans Pro-144–Thr-160. 2 stretches are compositionally biased toward polar residues: residues Pro-172–Lys-182 and Ser-206–Gln-239. Tyr-241 bears the Phosphotyrosine mark. Residue Arg-246 is modified to Omega-N-methylarginine. A Glycyl lysine isopeptide (Lys-Gly) (interchain with G-Cter in SUMO1) cross-link involves residue Lys-324. LIM zinc-binding domains are found at residues Gly-434–Leu-493, Glu-494–Pro-554, and Arg-555–Val-623.

It belongs to the zyxin/ajuba family. In terms of assembly, interacts with PDZ domains of SCRIB, with VASP and with ACTN1/alpha-actinin.

It localises to the nucleus. The protein localises to the cytoplasm. The protein resides in the cell junction. May play a structural role at sites of cell adhesion in maintaining cell shape and motility. In addition to these structural functions, it may also be implicated in signaling events and activation of gene transcription. May be involved in signal transduction from cell adhesion sites to the nucleus allowing successful integration of signals arising from soluble factors and cell-cell adhesion. Also suggested to serve as a scaffold protein upon which distinct protein complexes are assembled in the cytoplasm and in the nucleus. The chain is Lipoma-preferred partner homolog (Lpp) from Rattus norvegicus (Rat).